We begin with the raw amino-acid sequence, 545 residues long: CTP synthase (545 aa).

Residues 1 to 266 are amidoligase domain; it reads MTTRYIFVTG…DDLVVKRFGL (266 aa). Ser14 contacts CTP. Residue Ser14 participates in UTP binding. Residues 15-20 and Asp72 contribute to the ATP site; that span reads SLGKGI. Residues Asp72 and Glu140 each coordinate Mg(2+). CTP-binding positions include 147–149, 187–192, and Lys223; these read DIE and KTKPTQ. UTP contacts are provided by residues 187–192 and Lys223; that span reads KTKPTQ. Residue 239 to 241 participates in ATP binding; sequence KDV. The region spanning 291 to 542 is the Glutamine amidotransferase type-1 domain; it reads VIGMVGKYIE…IAAASAHQKR (252 aa). Residue Gly352 participates in L-glutamine binding. Catalysis depends on Cys379, which acts as the Nucleophile; for glutamine hydrolysis. L-glutamine is bound by residues 380–383, Glu403, and Arg470; that span reads LGMQ. Residues His515 and Glu517 contribute to the active site.

It belongs to the CTP synthase family. As to quaternary structure, homotetramer.

The catalysed reaction is UTP + L-glutamine + ATP + H2O = CTP + L-glutamate + ADP + phosphate + 2 H(+). It catalyses the reaction L-glutamine + H2O = L-glutamate + NH4(+). It carries out the reaction UTP + NH4(+) + ATP = CTP + ADP + phosphate + 2 H(+). It functions in the pathway pyrimidine metabolism; CTP biosynthesis via de novo pathway; CTP from UDP: step 2/2. Allosterically activated by GTP, when glutamine is the substrate; GTP has no effect on the reaction when ammonia is the substrate. The allosteric effector GTP functions by stabilizing the protein conformation that binds the tetrahedral intermediate(s) formed during glutamine hydrolysis. Inhibited by the product CTP, via allosteric rather than competitive inhibition. Catalyzes the ATP-dependent amination of UTP to CTP with either L-glutamine or ammonia as the source of nitrogen. Regulates intracellular CTP levels through interactions with the four ribonucleotide triphosphates. The protein is CTP synthase of Shewanella baltica (strain OS223).